The following is a 368-amino-acid chain: Peptide chain release factor 2 (368 aa).

Position 250 is an N5-methylglutamine (Q250).

This sequence belongs to the prokaryotic/mitochondrial release factor family. Post-translationally, methylated by PrmC. Methylation increases the termination efficiency of RF2.

The protein resides in the cytoplasm. Peptide chain release factor 2 directs the termination of translation in response to the peptide chain termination codons UGA and UAA. This chain is Peptide chain release factor 2, found in Mycolicibacterium vanbaalenii (strain DSM 7251 / JCM 13017 / BCRC 16820 / KCTC 9966 / NRRL B-24157 / PYR-1) (Mycobacterium vanbaalenii).